Consider the following 597-residue polypeptide: MKNIRNFSIIAHIDHGKSTLADRFIQYCGGLDLREMSTQVLDSMDIEKERGITIKAQTAALNYKARDGQVYQLNLIDTPGHVDFSYEVSRSLSACEGALLVVDASQGVEAQTVANCYTAIDLGVEVVPVLNKIDLPAADPERVEQEIEDIIGIDAVGAVQCSAKSGIGVEDVLEEIVAKIPAPTGDENAPLQAVIVDSWFDNYVGVVMLIRVKNGTIKLKDKVRFMSTKAETQVEQLGVFTPKSVQKQELKAGEVGFLITGVKELGQAKVGDTVTLVANPATEPLPGFQEVQSQVFAGLYPVESHDYEALRDALEKLQLNDASLKFEPEVSQALGFGFRCGFLGLLHLEIVQERLEREFDMDLITTAPTVIYEVVLKSGEKIEVENPSKLPDIGSIETILEPIITATILVPQEYVGNVMTLCNQKRGVQVNMQYMGRQVMLTYDLPMNEVVMDFFDKLKSTSRGYASLDYHFKEFQPSDLIKLDIMVNGEKVDALSLIVHRQSAVHRGRELASKMRELIPRQMFDIAVQAAIGSQIIARENVKALRKNVLAKCYGGDITRKKKLLEKQKAGKRRMKQVGNVEIPQSAFLAILQVSDK.

In terms of domain architecture, tr-type G spans 2–184 (KNIRNFSIIA…EIVAKIPAPT (183 aa)). Residues 14 to 19 (DHGKST) and 131 to 134 (NKID) contribute to the GTP site.

The protein belongs to the TRAFAC class translation factor GTPase superfamily. Classic translation factor GTPase family. LepA subfamily.

The protein resides in the cell inner membrane. The catalysed reaction is GTP + H2O = GDP + phosphate + H(+). Required for accurate and efficient protein synthesis under certain stress conditions. May act as a fidelity factor of the translation reaction, by catalyzing a one-codon backward translocation of tRNAs on improperly translocated ribosomes. Back-translocation proceeds from a post-translocation (POST) complex to a pre-translocation (PRE) complex, thus giving elongation factor G a second chance to translocate the tRNAs correctly. Binds to ribosomes in a GTP-dependent manner. The protein is Elongation factor 4 of Neisseria meningitidis serogroup B (strain ATCC BAA-335 / MC58).